The primary structure comprises 156 residues: Ribosomal RNA large subunit methyltransferase H (156 aa).

Residues Gly104 and Leu123 to Met128 each bind S-adenosyl-L-methionine.

The protein belongs to the RNA methyltransferase RlmH family. In terms of assembly, homodimer.

The protein resides in the cytoplasm. The enzyme catalyses pseudouridine(1915) in 23S rRNA + S-adenosyl-L-methionine = N(3)-methylpseudouridine(1915) in 23S rRNA + S-adenosyl-L-homocysteine + H(+). Its function is as follows. Specifically methylates the pseudouridine at position 1915 (m3Psi1915) in 23S rRNA. This chain is Ribosomal RNA large subunit methyltransferase H, found in Bdellovibrio bacteriovorus (strain ATCC 15356 / DSM 50701 / NCIMB 9529 / HD100).